The sequence spans 938 residues: Protein O-mannosyl-transferase Tmtc2 (938 aa).

Position 1 (Met1) is a topological domain, cytoplasmic. Residues 2-22 (PSLEPWLWGDSCSWLGMLAML) form a helical membrane-spanning segment. The Extracellular portion of the chain corresponds to 23-34 (RLRLHKSNMDFT). The chain crosses the membrane as a helical span at residues 35–55 (CLFCCSLAFVLYLNTLGAGFV). Residues 56–108 (YDDRRAILANADVSGGTPWQRSFSNDFWGTPLTDSGSHGSWRPLCVLSFRLNY) are Cytoplasmic-facing. A helical transmembrane segment spans residues 109-129 (LIGGGFAPWGFHLVNNLLHCV). Residues 130–139 (ATALVVRVAR) are Extracellular-facing. The helical transmembrane segment at 140-160 (TLLASVWAVLAAGALFAAHPI) threads the bilayer. Topologically, residues 161–164 (HTEA) are cytoplasmic. Residues 165–185 (VAGVVGRADLAACVCYLLTYL) traverse the membrane as a helical segment. The Extracellular portion of the chain corresponds to 186-208 (SYLRHMRWRESGDPRQWLALGAT). Residues 209 to 229 (LILAAAGLLCKETAITALLVC) form a helical membrane-spanning segment. The Cytoplasmic segment spans residues 230-249 (ALFDVMRGLSGQVDKQRLRS). Residues 250–270 (VCIVLGALFCMAYCRLVIVPG) form a helical membrane-spanning segment. Topologically, residues 271 to 291 (PQTAFSSADNPIARTPSAWTR) are extracellular. A helical transmembrane segment spans residues 292–312 (LLTFLYLPVFNLRLLLQPNVL). The Cytoplasmic segment spans residues 313–510 (SFDWGMDALP…HACVLIMSLS (198 aa)). A disordered region spans residues 450-480 (RSSSSCSNSTNSSSSSSSSSSSSSSSSSSLS). A helical membrane pass occupies residues 511 to 531 (FLALPFLPASNLLFYVGFVVA). Residues 532–533 (ER) are Extracellular-facing. Residues 534-554 (LLYLPSVGFCLLVGYGVSKLM) traverse the membrane as a helical segment. Over 555 to 562 (SCNQRTRN) the chain is Cytoplasmic. A helical transmembrane segment spans residues 563–580 (ILLLSFSLLLAAMSLRTL). Topologically, residues 581–938 (RRNADWRDEE…NLAKLGVTNV (358 aa)) are extracellular. TPR repeat units lie at residues 602 to 635 (PKALGNLGSVLSSQGRYEEAKQVLQEAIRFRPNM), 636 to 669 (ADVHFNLGILHQNQQVYPAAVECFQRAIKFRPNL), 670 to 703 (AVAYLNLGISFIALGKRQQAIEILQAGSNLDGAA), 715 to 748 (SSAYLQLGALYVEQGKLQRALAIYREALSSLPGL), 753 to 786 (EILYQRIGDVLGRLQQWDEAERHHRAALELQPNQ), 788 to 821 (AAHLSYGITLARNSSRASEAEMWFKRALKLAPEQ), 822 to 855 (ASVYHHYAEFLSLQSRHHESAIYHRRAAELAPND), 856 to 889 (YTLVVAAATAMRLLDRKVDAEMWYRKAVALRPGD), and 890 to 923 (AHAHTNLGAILHLLGRTNHAAASYKAALRLQPGD). Asn800 carries N-linked (GlcNAc...) asparagine glycosylation.

This sequence belongs to the TMTC family.

Its subcellular location is the membrane. The protein resides in the endoplasmic reticulum. The enzyme catalyses a di-trans,poly-cis-dolichyl beta-D-mannosyl phosphate + L-seryl-[protein] = 3-O-(alpha-D-mannosyl)-L-seryl-[protein] + a di-trans,poly-cis-dolichyl phosphate + H(+). It catalyses the reaction a di-trans,poly-cis-dolichyl beta-D-mannosyl phosphate + L-threonyl-[protein] = 3-O-(alpha-D-mannosyl)-L-threonyl-[protein] + a di-trans,poly-cis-dolichyl phosphate + H(+). The protein operates within protein modification; protein glycosylation. Transfers mannosyl residues to the hydroxyl group of serine or threonine residues. In Drosophila melanogaster (Fruit fly), this protein is Protein O-mannosyl-transferase Tmtc2.